The sequence spans 602 residues: Alpha-(1-&gt;6)-mannopyranosyltransferase B (602 aa).

Transmembrane regions (helical) follow at residues 105–125, 148–168, 190–210, 244–264, 274–294, 320–340, 368–388, 404–424, 448–468, 472–492, 503–523, 546–566, and 571–591; these read IGTM…ALPV, MIVL…APLV, TFGA…QDIY, VPFI…SIAA, IVGG…AAGW, LILH…FLLV, GVLI…LGFV, VVAI…TVVV, WMSM…NLGL, TAAM…AFMV, IHAV…FPVV, LGVI…GLAL, and VFSI…VGWW.

The protein belongs to the MptA/B family.

It is found in the membrane. It functions in the pathway cell wall biogenesis; cell wall polysaccharide biosynthesis. Involved in the initiation of core alpha-(1-&gt;6) mannan biosynthesis of lipomannan (LM-A) and multi-mannosylated polymer (LM-B), extending triacylatedphosphatidyl-myo-inositol dimannoside (Ac1PIM2) and mannosylated glycolipid, 1,2-di-O-C16/C18:1-(alpha-D-mannopyranosyl)-(1-&gt;4)-(alpha-D-glucopyranosyluronic acid)-(1-&gt;3)-glycerol (Man1GlcAGroAc2), respectively. Catalyzes the addition of alpha-(1-&gt;6)-mannose residue. The protein is Alpha-(1-&gt;6)-mannopyranosyltransferase B (mptB) of Corynebacterium glutamicum (strain ATCC 13032 / DSM 20300 / JCM 1318 / BCRC 11384 / CCUG 27702 / LMG 3730 / NBRC 12168 / NCIMB 10025 / NRRL B-2784 / 534).